Consider the following 335-residue polypeptide: Biotin synthase (335 aa).

The 224-residue stretch at 53–276 (VEIEGIVSVK…RTILRFAGGR (224 aa)) folds into the Radical SAM core domain. Positions 66, 70, and 73 each coordinate [4Fe-4S] cluster. [2Fe-2S] cluster-binding residues include cysteine 109, cysteine 142, cysteine 201, and arginine 271.

The protein belongs to the radical SAM superfamily. Biotin synthase family. In terms of assembly, homodimer. The cofactor is [4Fe-4S] cluster. It depends on [2Fe-2S] cluster as a cofactor.

The enzyme catalyses (4R,5S)-dethiobiotin + (sulfur carrier)-SH + 2 reduced [2Fe-2S]-[ferredoxin] + 2 S-adenosyl-L-methionine = (sulfur carrier)-H + biotin + 2 5'-deoxyadenosine + 2 L-methionine + 2 oxidized [2Fe-2S]-[ferredoxin]. It participates in cofactor biosynthesis; biotin biosynthesis; biotin from 7,8-diaminononanoate: step 2/2. Its function is as follows. Catalyzes the conversion of dethiobiotin (DTB) to biotin by the insertion of a sulfur atom into dethiobiotin via a radical-based mechanism. The polypeptide is Biotin synthase (Acidothermus cellulolyticus (strain ATCC 43068 / DSM 8971 / 11B)).